The chain runs to 153 residues: Inner membrane protein YjiG (153 aa).

Topologically, residues 1 to 31 (MTTQVRKNVMDMFIDGARRGFTIATTNLLPN) are periplasmic. Residues 32–52 (VVMAFVIIQALKITGLLDWVG) form a helical membrane-spanning segment. Over 53–68 (HICEPVMALWGLPGEA) the chain is Cytoplasmic. The next 2 membrane-spanning stretches (helical) occupy residues 69–89 (ATVL…AASL) and 90–110 (ATAG…MYLM). At 111-132 (GNPVQNVGRCLGTAEVNAKYYP) the chain is on the cytoplasmic side. Residues 133–153 (HIITVCVINALLSIWVMQLIV) form a helical membrane-spanning segment.

This sequence belongs to the SpmB family.

The protein resides in the cell inner membrane. The sequence is that of Inner membrane protein YjiG (yjiG) from Escherichia coli O157:H7.